The following is a 249-amino-acid chain: Flavin-dependent thymidylate synthase (249 aa).

In terms of domain architecture, ThyX spans 8–225 (VKVKLLEYTP…PNLFKYSGPS (218 aa)). FAD is bound by residues S62, 86 to 88 (RHR), and Q94. DUMP-binding positions include 83 to 86 (QLVR), 94 to 98 (QQSQR), and R164. The short motif at 86–96 (RHRIASYSQQS) is the ThyX motif element. Residues 180–182 (NAR) and N186 contribute to the FAD site. R191 contacts dUMP. R191 serves as the catalytic Involved in ionization of N3 of dUMP, leading to its activation.

The protein belongs to the thymidylate synthase ThyX family. In terms of assembly, homotetramer. FAD serves as cofactor.

It catalyses the reaction dUMP + (6R)-5,10-methylene-5,6,7,8-tetrahydrofolate + NADPH + H(+) = dTMP + (6S)-5,6,7,8-tetrahydrofolate + NADP(+). Its pathway is pyrimidine metabolism; dTTP biosynthesis. In terms of biological role, catalyzes the reductive methylation of 2'-deoxyuridine-5'-monophosphate (dUMP) to 2'-deoxythymidine-5'-monophosphate (dTMP) while utilizing 5,10-methylenetetrahydrofolate (mTHF) as the methyl donor, and NADPH and FADH(2) as the reductant. The sequence is that of Flavin-dependent thymidylate synthase from Clostridium tetani (strain Massachusetts / E88).